The following is a 370-amino-acid chain: UDP-N-acetylglucosamine--N-acetylmuramyl-(pentapeptide) pyrophosphoryl-undecaprenol N-acetylglucosamine transferase (370 aa).

Residues 10 to 12 (TGG), N124, S196, I253, and Q298 contribute to the UDP-N-acetyl-alpha-D-glucosamine site.

It belongs to the glycosyltransferase 28 family. MurG subfamily.

Its subcellular location is the cell membrane. It catalyses the reaction Mur2Ac(oyl-L-Ala-gamma-D-Glu-L-Lys-D-Ala-D-Ala)-di-trans,octa-cis-undecaprenyl diphosphate + UDP-N-acetyl-alpha-D-glucosamine = beta-D-GlcNAc-(1-&gt;4)-Mur2Ac(oyl-L-Ala-gamma-D-Glu-L-Lys-D-Ala-D-Ala)-di-trans,octa-cis-undecaprenyl diphosphate + UDP + H(+). It participates in cell wall biogenesis; peptidoglycan biosynthesis. In terms of biological role, cell wall formation. Catalyzes the transfer of a GlcNAc subunit on undecaprenyl-pyrophosphoryl-MurNAc-pentapeptide (lipid intermediate I) to form undecaprenyl-pyrophosphoryl-MurNAc-(pentapeptide)GlcNAc (lipid intermediate II). In Limosilactobacillus reuteri subsp. reuteri (strain JCM 1112) (Lactobacillus reuteri), this protein is UDP-N-acetylglucosamine--N-acetylmuramyl-(pentapeptide) pyrophosphoryl-undecaprenol N-acetylglucosamine transferase.